The primary structure comprises 1442 residues: ABC transporter G family member 35 (1442 aa).

The ABC transporter 1 domain maps to leucine 169 to glutamate 442. Glycine 202–threonine 209 is an ATP binding site. The ABC transmembrane type-2 1 domain occupies glutamate 520–leucine 733. 7 helical membrane-spanning segments follow: residues phenylalanine 538 to tyrosine 558, isoleucine 573 to methionine 593, leucine 619 to valine 639, phenylalanine 657 to threonine 677, isoleucine 683 to leucine 703, tryptophan 714 to phenylalanine 734, and isoleucine 769 to leucine 789. The ABC transporter 2 domain maps to methionine 840–proline 1092. Residue glycine 885–threonine 892 participates in ATP binding. Residues glycine 1165–tyrosine 1379 enclose the ABC transmembrane type-2 2 domain. A run of 7 helical transmembrane segments spans residues leucine 1186–isoleucine 1206, methionine 1218–valine 1238, leucine 1272–phenylalanine 1292, phenylalanine 1299–methionine 1319, valine 1329–isoleucine 1349, tryptophan 1357–serine 1377, and proline 1414–isoleucine 1434.

Belongs to the ABC transporter superfamily. ABCG family. PDR (TC 3.A.1.205) subfamily. As to expression, ubiquitous with higher levels in roots.

Its subcellular location is the membrane. May be a general defense protein. This chain is ABC transporter G family member 35 (ABCG35), found in Arabidopsis thaliana (Mouse-ear cress).